The following is a 1274-amino-acid chain: Polycomb protein Sfmbt (1274 aa).

Residues 266–285 (PSSKQMKGYRNSNSSGTSSA) form a disordered region. A compositionally biased stretch (polar residues) spans 267 to 278 (SSKQMKGYRNSN). Residues 331–366 (PIQKDGMAVCERCGAIGVKHTFYTKSRRFCSMACAR) form an FCS-type zinc finger. 4 residues coordinate Zn(2+): cysteine 340, cysteine 343, cysteine 360, and cysteine 364. A compositionally biased stretch (low complexity) spans 381-394 (TGATTSNNQSTSSS). Disordered stretches follow at residues 381–401 (TGAT…AASG) and 488–510 (PGGE…SGYL). Residues 494–509 (GSGNDTSTPNTASSGY) are compositionally biased toward polar residues. MBT repeat units lie at residues 564-675 (YDWL…LIPP), 683-781 (KDWK…LAAP), 789-899 (LAGR…VTPP), and 907-1003 (FTWE…LEGP). 2 disordered regions span residues 1007 to 1063 (SYQQ…TTPH) and 1083 to 1167 (YENN…NSSA). Residues 1019–1028 (KVPRKKKTKK) are compositionally biased toward basic residues. Residues 1038–1050 (AKQQNDNTQTTQT) show a composition bias toward low complexity. Residues 1087-1114 (QPEDGDGDEEDPDPDADADLDADADGDG) are compositionally biased toward acidic residues. 2 stretches are compositionally biased toward polar residues: residues 1117–1128 (STSHISEQSTTH) and 1158–1167 (GNSNKMNSSA). Positions 1194–1258 (WNVYDVSQFL…DLITQLKCKV (65 aa)) constitute an SAM domain.

In terms of assembly, interacts with pho as a component of the pho-repressive complex (PhoRC).

The protein localises to the nucleus. Functionally, polycomb group (PcG) protein that binds to the Polycomb response elements (PREs) found in the regulatory regions of many genes. PcG proteins act by forming multiprotein complexes, which are required to maintain the transcriptionally repressive state of homeotic genes throughout development. PcG proteins are not required to initiate repression, but to maintain it during later stages of development. They probably act via the methylation of histones, rendering chromatin heritably changed in its expressibility. Necessary but not sufficient to recruit a functional PcG repressive complex that represses target genes, suggesting that the recruitment of the distinct PRC1 complex is also required to allow a subsequent repression. This chain is Polycomb protein Sfmbt, found in Drosophila pseudoobscura pseudoobscura (Fruit fly).